An 86-amino-acid polypeptide reads, in one-letter code: Putative defensin-like protein 189 (86 aa).

The signal sequence occupies residues 1-28 (MKMAKSANEIGFITCLVVFLVLTGQSNG). 4 cysteine pairs are disulfide-bonded: C39–C85, C52–C71, C57–C80, and C61–C82.

This sequence belongs to the DEFL family.

The protein localises to the secreted. The sequence is that of Putative defensin-like protein 189 from Arabidopsis thaliana (Mouse-ear cress).